Consider the following 184-residue polypeptide: MVVIAVSGQPGSGKTTIAREIARVLGLPLVSSGLLFREMAARMGMDFIEFHKYAETNPDIDKKVDSLAIERAKAGDVVLEGHLTAWIVRPYADVCIYLKASLETRARRVALRDGKSLQDALREVAEREELNRRRYLSIYGIDINDLSIFDLVLDTSHLSVNDAVRISLDYTCTSLSFKYSRKIC.

An ATP-binding site is contributed by 8–16 (GQPGSGKTT).

Belongs to the cytidylate kinase family. Type 2 subfamily.

The protein resides in the cytoplasm. It catalyses the reaction CMP + ATP = CDP + ADP. The catalysed reaction is dCMP + ATP = dCDP + ADP. This is Cytidylate kinase from Pyrobaculum aerophilum (strain ATCC 51768 / DSM 7523 / JCM 9630 / CIP 104966 / NBRC 100827 / IM2).